The chain runs to 589 residues: Sulfite reductase [NADPH] hemoprotein beta-component (589 aa).

[4Fe-4S] cluster-binding residues include C443, C449, C488, and C492. C492 is a siroheme binding site.

The protein belongs to the nitrite and sulfite reductase 4Fe-4S domain family. As to quaternary structure, alpha(8)-beta(8). The alpha component is a flavoprotein, the beta component is a hemoprotein. Requires siroheme as cofactor. The cofactor is [4Fe-4S] cluster.

It catalyses the reaction hydrogen sulfide + 3 NADP(+) + 3 H2O = sulfite + 3 NADPH + 4 H(+). It functions in the pathway sulfur metabolism; hydrogen sulfide biosynthesis; hydrogen sulfide from sulfite (NADPH route): step 1/1. Its function is as follows. Component of the sulfite reductase complex that catalyzes the 6-electron reduction of sulfite to sulfide. This is one of several activities required for the biosynthesis of L-cysteine from sulfate. The protein is Sulfite reductase [NADPH] hemoprotein beta-component of Neisseria meningitidis serogroup C (strain 053442).